A 209-amino-acid chain; its full sequence is Putative cardiolipin synthase (209 aa).

The next 4 membrane-spanning stretches (helical) occupy residues 27–47, 82–102, 126–146, and 157–177; these read AFVY…ILVF, VTVP…VLTL, VTYV…TILL, and LLAC…WAFV.

It belongs to the CDP-alcohol phosphatidyltransferase class-I family.

The protein resides in the cell membrane. The catalysed reaction is a CDP-1,2-diacyl-sn-glycerol + a 1,2-diacyl-sn-glycero-3-phospho-(1'-sn-glycerol) = a cardiolipin + CMP + H(+). Its pathway is lipid metabolism; phospholipid metabolism. Its function is as follows. May catalyze the biosynthesis of cardiolipin from phosphatidylglycerol (PG) and CDP-diacylglycerol. In Mycobacterium bovis (strain ATCC BAA-935 / AF2122/97), this protein is Putative cardiolipin synthase.